The sequence spans 452 residues: Exodeoxyribonuclease 7 large subunit (452 aa).

Belongs to the XseA family. Heterooligomer composed of large and small subunits.

The protein resides in the cytoplasm. The catalysed reaction is Exonucleolytic cleavage in either 5'- to 3'- or 3'- to 5'-direction to yield nucleoside 5'-phosphates.. In terms of biological role, bidirectionally degrades single-stranded DNA into large acid-insoluble oligonucleotides, which are then degraded further into small acid-soluble oligonucleotides. This is Exodeoxyribonuclease 7 large subunit from Bacillus cereus (strain 03BB102).